We begin with the raw amino-acid sequence, 412 residues long: Acyl-[acyl-carrier-protein] hydrolase FATB2, chloroplastic (412 aa).

2 stretches are compositionally biased toward low complexity: residues 1 to 13 and 56 to 66; these read TAAS…VPSA and GSSVGLKSGGL. Residues 1-46 constitute a chloroplast transit peptide; that stretch reads TAASSAFFPVPSADTSSRPGKLGNGPSSFSPLKPKSIPNGGLQVKA. A disordered region spans residues 1–78; the sequence is TAASSAFFPV…HDDAPSAPPP (78 aa). Catalysis depends on residues Asn311, His313, and Cys348.

Belongs to the acyl-ACP thioesterase family.

It localises to the plastid. The protein resides in the chloroplast. It catalyses the reaction tetradecanoyl-[ACP] + H2O = tetradecanoate + holo-[ACP] + H(+). The enzyme catalyses hexadecanoyl-[ACP] + H2O = hexadecanoate + holo-[ACP] + H(+). Functionally, plays an essential role in chain termination during de novo fatty acid synthesis. Possesses thioesterase activity for medium chain acyl-ACPs. Substrate preference is 14:0 &gt; 16:0 &gt; 16:1. This chain is Acyl-[acyl-carrier-protein] hydrolase FATB2, chloroplastic, found in Cuphea viscosissima (Blue waxweed).